The following is a 160-amino-acid chain: Transmembrane protein 191A (160 aa).

The chain crosses the membrane as a helical span at residues 24-44 (FCFPLDFVSNLFWIFASKFII).

It belongs to the TMEM191 family.

Its subcellular location is the membrane. The sequence is that of Transmembrane protein 191A (TMEM191A) from Homo sapiens (Human).